Consider the following 511-residue polypeptide: Myrosinase 5 (511 aa).

Residues 1–23 (MAIPKAHYSLAVLVLLFVVVSSS) form the signal peptide. 3 cysteine pairs are disulfide-bonded: cysteine 31–cysteine 450, cysteine 39–cysteine 445, and cysteine 230–cysteine 233. Asparagine 46 and asparagine 53 each carry an N-linked (GlcNAc...) asparagine glycan. A beta-D-glucoside is bound by residues glutamine 64, histidine 165, and 210–211 (NQ). Asparagine 222 carries N-linked (GlcNAc...) asparagine glycosylation. A beta-D-glucoside-binding residues include tyrosine 351 and glutamate 418. The Nucleophile role is filled by glutamate 418. An N-linked (GlcNAc...) asparagine glycan is attached at asparagine 428. A beta-D-glucoside contacts are provided by residues tryptophan 467, 474–475 (EF), and phenylalanine 483. Asparagine 489 is a glycosylation site (N-linked (GlcNAc...) asparagine).

The protein belongs to the glycosyl hydrolase 1 family. As to expression, specifically expressed in roots.

The enzyme catalyses a thioglucoside + H2O = a sugar + a thiol.. The catalysed reaction is Hydrolysis of terminal, non-reducing beta-D-glucosyl residues with release of beta-D-glucose.. Hydrolyzes sinigrin and, with lower efficiency, p-nitrophenyl beta-D-glucoside. This is Myrosinase 5 from Arabidopsis thaliana (Mouse-ear cress).